The primary structure comprises 154 residues: Ribonuclease H (154 aa).

The region spanning 5–146 (EQNIVYLYCD…ADELANRGID (142 aa)) is the RNase H type-1 domain. Mg(2+) contacts are provided by Asp14, Glu52, Asp74, and Asp138.

The protein belongs to the RNase H family. As to quaternary structure, monomer. Mg(2+) is required as a cofactor.

Its subcellular location is the cytoplasm. It catalyses the reaction Endonucleolytic cleavage to 5'-phosphomonoester.. Functionally, endonuclease that specifically degrades the RNA of RNA-DNA hybrids. This Coxiella burnetii (strain RSA 331 / Henzerling II) protein is Ribonuclease H.